Here is a 204-residue protein sequence, read N- to C-terminus: MCEGEKKKDSSSGALYCVNLALRIVVLGLAVAAAALMATASQCTIFLYYGGPLHTITYKDFGPFVYLVVASSIGAFMEAIAIFLTICKKKDGTPAKVLLPLLDAAVPVLLYSATAAAFAAGDMSYCAVGKRVGVCTTAAAGNFCNQVHIAMYVSLAAGVALLVAEIVKHWPDSGKKKEGGGGGCGSDSDSDKSTPCHHGCHSKH.

Topologically, residues 1–19 (MCEGEKKKDSSSGALYCVN) are cytoplasmic. A helical transmembrane segment spans residues 20–40 (LALRIVVLGLAVAAAALMATA). Over 41–63 (SQCTIFLYYGGPLHTITYKDFGP) the chain is Extracellular. Residues 64–84 (FVYLVVASSIGAFMEAIAIFL) traverse the membrane as a helical segment. Residues 85–97 (TICKKKDGTPAKV) are Cytoplasmic-facing. The helical transmembrane segment at 98–118 (LLPLLDAAVPVLLYSATAAAF) threads the bilayer. The Extracellular portion of the chain corresponds to 119 to 146 (AAGDMSYCAVGKRVGVCTTAAAGNFCNQ). Residues 147 to 167 (VHIAMYVSLAAGVALLVAEIV) form a helical membrane-spanning segment. The Cytoplasmic portion of the chain corresponds to 168–204 (KHWPDSGKKKEGGGGGCGSDSDSDKSTPCHHGCHSKH). The tract at residues 173 to 204 (SGKKKEGGGGGCGSDSDSDKSTPCHHGCHSKH) is disordered.

It belongs to the Casparian strip membrane proteins (CASP) family. As to quaternary structure, homodimer and heterodimers.

It localises to the cell membrane. This is CASP-like protein 1U3 from Oryza sativa subsp. japonica (Rice).